A 507-amino-acid chain; its full sequence is Histidine ammonia-lyase (507 aa).

A cross-link (5-imidazolinone (Ala-Gly)) is located at residues Ala141 to Gly143. Ser142 carries the 2,3-didehydroalanine (Ser) modification.

It belongs to the PAL/histidase family. Post-translationally, contains an active site 4-methylidene-imidazol-5-one (MIO), which is formed autocatalytically by cyclization and dehydration of residues Ala-Ser-Gly.

The protein localises to the cytoplasm. The enzyme catalyses L-histidine = trans-urocanate + NH4(+). Its pathway is amino-acid degradation; L-histidine degradation into L-glutamate; N-formimidoyl-L-glutamate from L-histidine: step 1/3. This chain is Histidine ammonia-lyase, found in Burkholderia pseudomallei (strain 1106a).